The chain runs to 518 residues: Probable cytochrome P450 9h1 (518 aa).

Cys462 provides a ligand contact to heme.

It belongs to the cytochrome P450 family. Requires heme as cofactor.

Its subcellular location is the endoplasmic reticulum membrane. The protein resides in the microsome membrane. May be involved in the metabolism of insect hormones and in the breakdown of synthetic insecticides. This Drosophila melanogaster (Fruit fly) protein is Probable cytochrome P450 9h1 (Cyp9h1).